Reading from the N-terminus, the 105-residue chain is Small ribosomal subunit protein bS18 (105 aa).

Residues 1-34 (MMINKEQDLNQLETNQEQSVEQNQTDEKRKPKPN) are disordered. Over residues 9–23 (LNQLETNQEQSVEQN) the composition is skewed to polar residues.

The protein belongs to the bacterial ribosomal protein bS18 family. Part of the 30S ribosomal subunit. Forms a tight heterodimer with protein bS6.

Functionally, binds as a heterodimer with protein bS6 to the central domain of the 16S rRNA, where it helps stabilize the platform of the 30S subunit. The chain is Small ribosomal subunit protein bS18 from Mycoplasma genitalium (strain ATCC 33530 / DSM 19775 / NCTC 10195 / G37) (Mycoplasmoides genitalium).